Consider the following 77-residue polypeptide: U8-lycotoxin-Ls1m (77 aa).

A signal peptide spans 1–20 (MKLIIFTGLVLFSIVSLIEA). Positions 21–26 (QAENEK) are excised as a propeptide.

This sequence belongs to the neurotoxin 19 (CSTX) family. 08 (U8-Lctx) subfamily. Contains 4 disulfide bonds. As to expression, expressed by the venom gland.

The protein resides in the secreted. The protein is U8-lycotoxin-Ls1m of Lycosa singoriensis (Wolf spider).